A 387-amino-acid chain; its full sequence is Probable G-protein coupled receptor 173 (387 aa).

At 1–40 (MANGNASSDGPGNPLAAVVSTTGGVMGGAPSSAVSTYVKL) the chain is on the extracellular side. A glycan (N-linked (GlcNAc...) asparagine) is linked at Asn5. A helical transmembrane segment spans residues 41–61 (VLLGLIICISLVGNLVVSLLV). At 62–87 (LRDRALHKAPYYFLLDLCLADTIRSA) the chain is on the cytoplasmic side. The helical transmembrane segment at 88–108 (VCFPFVLVSIKNGSAWTYSVL) threads the bilayer. Topologically, residues 109 to 111 (SCK) are extracellular. Residues Cys110 and Cys188 are joined by a disulfide bond. The chain crosses the membrane as a helical span at residues 112–132 (VVAFMAVLFCFHAAFMLFCIS). Topologically, residues 133–153 (VTRYMAIAHHRFYSKRMTFWT) are cytoplasmic. A helical membrane pass occupies residues 154–174 (CVAVVCMVWTLSVAMAFPPVF). Over 175–202 (DVGTYKFIREEDQCIFEHRYFKANDTLG) the chain is Extracellular. N-linked (GlcNAc...) asparagine glycosylation is present at Asn198. A helical transmembrane segment spans residues 203–223 (FMLMLAVLILATHVVYMKLLL). Over 224 to 301 (FEYKHRKMKP…FKAEKQLGRM (78 aa)) the chain is Cytoplasmic. Residues 302–322 (FYVITLFFLVLWSPYIVACYW) form a helical membrane-spanning segment. Topologically, residues 323–335 (RVFVKACTIPHRY) are extracellular. The helical transmembrane segment at 336-356 (LSTTVWMSFAQAGVNPIICFF) threads the bilayer. Over 357-387 (LNKDLKKGLLAHLPPCCRTPPQLPREPYCVM) the chain is Cytoplasmic.

The protein belongs to the G-protein coupled receptor 1 family.

It is found in the cell membrane. In terms of biological role, is a receptor for the SMIM20 derived peptides Phoenixin-14 and Phoenixin-20. It mediates the Phoenixin-14 and Phoenixin-20 augmentation of gonadotropin-releasing hormone (GNRH) signaling in the hypothalamus and pituitary gland. In the ovary, it mediates the effects of Phoenixin-14 and Phoenixin-20 induced granulosa cell proliferation during follicular growth. The chain is Probable G-protein coupled receptor 173 (gpr173) from Danio rerio (Zebrafish).